The chain runs to 608 residues: RAS guanyl-releasing protein 2 (608 aa).

The 123-residue stretch at 4-126 (TLDLDKGCTV…SLIDIESVPT (123 aa)) folds into the N-terminal Ras-GEF domain. Serine 116, serine 117, and serine 147 each carry phosphoserine. The Ras-GEF domain maps to 154–387 (EPMELAEHLT…YQLSLQREPR (234 aa)). The disordered stretch occupies residues 382 to 405 (LQREPRSKSSPTSPTSCTPPPRPP). EF-hand domains lie at 426 to 461 (HIEK…FPYL) and 463 to 490 (AFGD…SSSV). 10 residues coordinate Ca(2+): aspartate 439, aspartate 441, aspartate 443, histidine 445, glutamate 450, aspartate 468, asparagine 470, aspartate 472, cysteine 474, and glutamate 479. Residues 498–548 (VHNFQESNSLRPVACRHCKALILGIYKQGLKCRACGVNCHKQCKERLSVEC) form a Phorbol-ester/DAG-type zinc finger. Serine 554 and serine 575 each carry phosphoserine. Positions 555 to 596 (VSLEGSAPSPSPTHTHHRAFSFSLPRPGRRSSRPPEIREEEV) are disordered.

This sequence belongs to the RASGRP family. In terms of assembly, forms a signaling complex with RAP1 and BRAF. Interacts with F-actin. Interacts with RAP1. As to expression, detected in megakaryocytes, platelet and neutrophils but not in lymphocytes (at protein level). Isoform 1 and isoform 3 are detected in brain basal glanglia, heart, lung, spleen, liver and kidney interstitial cells.

The protein resides in the cytoplasm. It is found in the cytosol. Its subcellular location is the cell membrane. It localises to the synapse. The protein localises to the synaptosome. The protein resides in the cell projection. It is found in the ruffle membrane. Functionally, functions as a calcium- and DAG-regulated nucleotide exchange factor specifically activating Rap through the exchange of bound GDP for GTP. May also activate other GTPases such as RRAS, RRAS2, NRAS, KRAS but not HRAS. Functions in aggregation of platelets and adhesion of T-lymphocytes and neutrophils probably through inside-out integrin activation. May function in the muscarinic acetylcholine receptor M1/CHRM1 signaling pathway. The chain is RAS guanyl-releasing protein 2 (Rasgrp2) from Mus musculus (Mouse).